The following is a 141-amino-acid chain: Hemoglobin subunit alpha (141 aa).

Positions 1–141 (VLSPADKTNV…VSTVLTSKYR (141 aa)) constitute a Globin domain. Ser-3 bears the Phosphoserine mark. Lys-7 is modified (N6-succinyllysine). Thr-8 carries the post-translational modification Phosphothreonine. Lys-11 carries the N6-succinyllysine modification. At Ser-35 the chain carries Phosphoserine. An N6-succinyllysine modification is found at Lys-40. Ser-49 is subject to Phosphoserine. His-58 contacts O2. His-87 is a heme b binding site. Ser-102 bears the Phosphoserine mark. Thr-108 is subject to Phosphothreonine. Ser-124 carries the phosphoserine modification. Phosphothreonine occurs at positions 134 and 137. The residue at position 138 (Ser-138) is a Phosphoserine.

Belongs to the globin family. Heterotetramer of two alpha chains and two beta chains. Red blood cells.

In terms of biological role, involved in oxygen transport from the lung to the various peripheral tissues. Hemopressin acts as an antagonist peptide of the cannabinoid receptor CNR1. Hemopressin-binding efficiently blocks cannabinoid receptor CNR1 and subsequent signaling. The polypeptide is Hemoglobin subunit alpha (HBA) (Eulemur fulvus fulvus (Brown lemur)).